The following is a 173-amino-acid chain: Dirigent protein 8 (173 aa).

The N-terminal stretch at 1-22 (MTNLILIFAAQILLFYAVASVG) is a signal peptide. N-linked (GlcNAc...) asparagine glycosylation is found at Asn69, Asn90, and Asn125.

This sequence belongs to the plant dirigent protein family. As to quaternary structure, homodimer.

The protein resides in the secreted. It is found in the extracellular space. Its subcellular location is the apoplast. In terms of biological role, dirigent proteins impart stereoselectivity on the phenoxy radical-coupling reaction, yielding optically active lignans from two molecules of coniferyl alcohol in the biosynthesis of lignans, flavonolignans, and alkaloids and thus plays a central role in plant secondary metabolism. The sequence is that of Dirigent protein 8 (DIR8) from Arabidopsis thaliana (Mouse-ear cress).